The chain runs to 277 residues: F420-dependent methylenetetrahydromethanopterin dehydrogenase (277 aa).

It belongs to the MTD family.

It catalyses the reaction 5,10-methylenetetrahydromethanopterin + oxidized coenzyme F420-(gamma-L-Glu)(n) + 2 H(+) = 5,10-methenyl-5,6,7,8-tetrahydromethanopterin + reduced coenzyme F420-(gamma-L-Glu)(n). It participates in one-carbon metabolism; methanogenesis from CO(2); 5,10-methylene-5,6,7,8-tetrahydromethanopterin from 5,10-methenyl-5,6,7,8-tetrahydromethanopterin (coenzyme F420 route): step 1/1. Functionally, catalyzes the reversible reduction of methenyl-H(4)MPT(+) to methylene-H(4)MPT. The polypeptide is F420-dependent methylenetetrahydromethanopterin dehydrogenase (Methanococcus maripaludis (strain C7 / ATCC BAA-1331)).